The sequence spans 151 residues: Ribosome maturation factor RimP (151 aa).

This sequence belongs to the RimP family.

Its subcellular location is the cytoplasm. In terms of biological role, required for maturation of 30S ribosomal subunits. The polypeptide is Ribosome maturation factor RimP (Vibrio parahaemolyticus serotype O3:K6 (strain RIMD 2210633)).